A 171-amino-acid chain; its full sequence is Mitoferrin-1 (171 aa).

Residues 1-40 (MELRRGGVGSQARARRMDGDSRDGGGGCKDAGSEDYENLP) form a disordered region. The stretch at 43–131 (ASLSTHMTAG…FACYENMKRT (89 aa)) is one Solcar repeat. A run of 3 helical transmembrane segments spans residues 45–64 (LSTH…SVMY), 105–125 (RGLN…FACY), and 143–163 (HLAN…PSTD).

This sequence belongs to the mitochondrial carrier (TC 2.A.29) family. As to quaternary structure, interacts with ACB10; this interaction stabilizes SLC25A37 and enhances the function of SLC25A37 to import mitochondrial iron during erythroid differentiation.

It localises to the mitochondrion inner membrane. The catalysed reaction is Fe(2+)(in) = Fe(2+)(out). Mitochondrial iron transporter that specifically mediates iron uptake in developing erythroid cells, thereby playing an essential role in heme biosynthesis. The sequence is that of Mitoferrin-1 (SLC25A37) from Bos taurus (Bovine).